Here is a 348-residue protein sequence, read N- to C-terminus: Phosphoribosylformylglycinamidine cyclo-ligase (348 aa).

This sequence belongs to the AIR synthase family.

It localises to the cytoplasm. The enzyme catalyses 2-formamido-N(1)-(5-O-phospho-beta-D-ribosyl)acetamidine + ATP = 5-amino-1-(5-phospho-beta-D-ribosyl)imidazole + ADP + phosphate + H(+). Its pathway is purine metabolism; IMP biosynthesis via de novo pathway; 5-amino-1-(5-phospho-D-ribosyl)imidazole from N(2)-formyl-N(1)-(5-phospho-D-ribosyl)glycinamide: step 2/2. The chain is Phosphoribosylformylglycinamidine cyclo-ligase from Ruegeria pomeroyi (strain ATCC 700808 / DSM 15171 / DSS-3) (Silicibacter pomeroyi).